The chain runs to 315 residues: Ribosomal RNA small subunit methyltransferase H (315 aa).

S-adenosyl-L-methionine is bound by residues 37 to 39, aspartate 57, phenylalanine 83, aspartate 105, and glutamine 112; that span reads GGH. Residues 296 to 315 form a disordered region; that stretch reads EVKANPRSRSAVMRVAEKVR.

The protein belongs to the methyltransferase superfamily. RsmH family.

The protein resides in the cytoplasm. It catalyses the reaction cytidine(1402) in 16S rRNA + S-adenosyl-L-methionine = N(4)-methylcytidine(1402) in 16S rRNA + S-adenosyl-L-homocysteine + H(+). Its function is as follows. Specifically methylates the N4 position of cytidine in position 1402 (C1402) of 16S rRNA. The protein is Ribosomal RNA small subunit methyltransferase H of Stutzerimonas stutzeri (strain A1501) (Pseudomonas stutzeri).